A 288-amino-acid polypeptide reads, in one-letter code: Protease HtpX homolog (288 aa).

2 consecutive transmembrane segments (helical) span residues 1-21 (MHTI…LLAG) and 23-43 (IIGG…MNFF). A Zn(2+)-binding site is contributed by His130. Glu131 is an active-site residue. Residue His134 coordinates Zn(2+). The next 2 helical transmembrane spans lie at 140–160 (ILIS…AEMA) and 175–195 (IGGL…AMII). Glu204 is a Zn(2+) binding site.

Belongs to the peptidase M48B family. It depends on Zn(2+) as a cofactor.

The protein resides in the cell inner membrane. The chain is Protease HtpX homolog from Persephonella marina (strain DSM 14350 / EX-H1).